A 445-amino-acid chain; its full sequence is Scarecrow-like protein 18 (445 aa).

The segment covering 1–21 has biased composition (low complexity); it reads MLTSFKSSSSSSEDATATTTE. The tract at residues 1–26 is disordered; sequence MLTSFKSSSSSSEDATATTTENPPPL. Positions 32–445 constitute a GRAS domain; the sequence is SAATSASHHL…RPLFSVSSWK (414 aa). The leucine repeat I (LRI) stretch occupies residues 39–127; the sequence is HHLRRLLFTA…STVFTSSVCK (89 aa). Positions 146–217 are VHIID; sequence YLWLNQLTPF…SPPPSLRITG (72 aa). The VHIID signature appears at 179-183; sequence LHILD. A leucine repeat II (LRII) region spans residues 227 to 259; sequence RTGDRLTRFADSLGLQFQFHTLVIVEEDLAGLL. The PFYRE stretch occupies residues 275-366; the sequence is IAVNCVHFLH…QRWFGKEILD (92 aa). Residues 369–445 form an SAW region; it reads AAEETERKQR…RPLFSVSSWK (77 aa).

It belongs to the GRAS family. As to expression, expressed in roots and flowers.

Its subcellular location is the nucleus. Functionally, probable transcription factor required for axillary (lateral) shoot meristem formation during vegetative development. Seems to act upstream of REVOLUTA. This Arabidopsis thaliana (Mouse-ear cress) protein is Scarecrow-like protein 18 (SCL18).